Consider the following 353-residue polypeptide: Photosystem II D2 protein (353 aa).

The residue at position 2 (threonine 2) is an N-acetylthreonine. Threonine 2 carries the post-translational modification Phosphothreonine. A helical membrane pass occupies residues 41 to 61; it reads CAYFALGGWFTGTTFVTSWYT. Histidine 118 contributes to the chlorophyll a binding site. The helical transmembrane segment at 125-141 threads the bilayer; it reads GFMLRQFELARSVQLRP. Pheophytin a is bound by residues glutamine 130 and asparagine 143. The helical transmembrane segment at 153–166 threads the bilayer; the sequence is VFVSVFLIYPLGQS. Histidine 198 contributes to the chlorophyll a binding site. The chain crosses the membrane as a helical span at residues 208-228; that stretch reads AALLCAIHGATVENTLFEDGD. A plastoquinone-binding residues include histidine 215 and phenylalanine 262. Position 215 (histidine 215) interacts with Fe cation. Histidine 269 contributes to the Fe cation binding site. Residues 279–295 traverse the membrane as a helical segment; it reads GLWMSAIGVVGLALNLR.

The protein belongs to the reaction center PufL/M/PsbA/D family. PSII is composed of 1 copy each of membrane proteins PsbA, PsbB, PsbC, PsbD, PsbE, PsbF, PsbH, PsbI, PsbJ, PsbK, PsbL, PsbM, PsbT, PsbX, PsbY, PsbZ, Psb30/Ycf12, at least 3 peripheral proteins of the oxygen-evolving complex and a large number of cofactors. It forms dimeric complexes. The cofactor is The D1/D2 heterodimer binds P680, chlorophylls that are the primary electron donor of PSII, and subsequent electron acceptors. It shares a non-heme iron and each subunit binds pheophytin, quinone, additional chlorophylls, carotenoids and lipids. There is also a Cl(-1) ion associated with D1 and D2, which is required for oxygen evolution. The PSII complex binds additional chlorophylls, carotenoids and specific lipids..

It is found in the plastid. Its subcellular location is the chloroplast thylakoid membrane. The enzyme catalyses 2 a plastoquinone + 4 hnu + 2 H2O = 2 a plastoquinol + O2. Its function is as follows. Photosystem II (PSII) is a light-driven water:plastoquinone oxidoreductase that uses light energy to abstract electrons from H(2)O, generating O(2) and a proton gradient subsequently used for ATP formation. It consists of a core antenna complex that captures photons, and an electron transfer chain that converts photonic excitation into a charge separation. The D1/D2 (PsbA/PsbD) reaction center heterodimer binds P680, the primary electron donor of PSII as well as several subsequent electron acceptors. D2 is needed for assembly of a stable PSII complex. This chain is Photosystem II D2 protein, found in Saccharum hybrid (Sugarcane).